The chain runs to 293 residues: MLHGTEVLKKGFAKMTKGGVIMDVVNAEQAAIAEDSGAVAVMALEKVPADIRASGGVARMADPNKVQEIMDAVSIPVMAKVRIGHFVEAQVLEALGVDMIDESEVLTPADERFHIDKKKFTVPFVCGARNLGEALRRIDEGAAMIRTKGEPGTGNIVEAVRHMRIMMSEIREIQNKEEEELWEVSRKIEAPLELVRETAKLGKLPVVNFAAGGVATPADAALMMQLGADGVFVGSGIFKSDNPEGYARAIVEATAHYDDPEVIAEVSRGLGTAMRGLEISEIPEEGRMQDRGW.

Aspartate 23 lines the D-ribose 5-phosphate pocket. Catalysis depends on lysine 80, which acts as the Schiff-base intermediate with D-ribose 5-phosphate. Glycine 152 is a binding site for D-ribose 5-phosphate. Residue arginine 164 coordinates D-glyceraldehyde 3-phosphate. D-ribose 5-phosphate-binding positions include glycine 213 and 234 to 235 (GS).

Belongs to the PdxS/SNZ family. As to quaternary structure, in the presence of PdxT, forms a dodecamer of heterodimers.

The catalysed reaction is aldehydo-D-ribose 5-phosphate + D-glyceraldehyde 3-phosphate + L-glutamine = pyridoxal 5'-phosphate + L-glutamate + phosphate + 3 H2O + H(+). It functions in the pathway cofactor biosynthesis; pyridoxal 5'-phosphate biosynthesis. Catalyzes the formation of pyridoxal 5'-phosphate from ribose 5-phosphate (RBP), glyceraldehyde 3-phosphate (G3P) and ammonia. The ammonia is provided by the PdxT subunit. Can also use ribulose 5-phosphate and dihydroxyacetone phosphate as substrates, resulting from enzyme-catalyzed isomerization of RBP and G3P, respectively. This chain is Pyridoxal 5'-phosphate synthase subunit PdxS, found in Methanothermobacter thermautotrophicus (strain ATCC 29096 / DSM 1053 / JCM 10044 / NBRC 100330 / Delta H) (Methanobacterium thermoautotrophicum).